The following is a 431-amino-acid chain: Tyrosine--tRNA ligase (431 aa).

Y34 serves as a coordination point for L-tyrosine. Positions 39–48 match the 'HIGH' region motif; that stretch reads PTADSLHIGH. L-tyrosine-binding residues include Y171 and Q175. A 'KMSKS' region motif is present at residues 231–235; it reads KFGKT. K234 provides a ligand contact to ATP. One can recognise an S4 RNA-binding domain in the interval 353–422; it reads INAVEALVKT…GKYTILRRGK (70 aa).

It belongs to the class-I aminoacyl-tRNA synthetase family. TyrS type 1 subfamily. Homodimer.

It localises to the cytoplasm. It carries out the reaction tRNA(Tyr) + L-tyrosine + ATP = L-tyrosyl-tRNA(Tyr) + AMP + diphosphate + H(+). Functionally, catalyzes the attachment of tyrosine to tRNA(Tyr) in a two-step reaction: tyrosine is first activated by ATP to form Tyr-AMP and then transferred to the acceptor end of tRNA(Tyr). This Neisseria gonorrhoeae (strain ATCC 700825 / FA 1090) protein is Tyrosine--tRNA ligase.